A 129-amino-acid polypeptide reads, in one-letter code: uncharacterized protein (129 aa).

An N-terminal signal peptide occupies residues 1 to 17 (MCPECFFLMLFFCGYRA). Residues 26-36 (SSSSSSSFRSS) show a composition bias toward low complexity. The interval 26–76 (SSSSSSSFRSSPAYGFSGRPPGGAGCRERSQRSCLRPGGLPSLTRNPGLQR) is disordered.

This is an uncharacterized protein from Escherichia coli O157:H7.